Reading from the N-terminus, the 312-residue chain is Methionyl-tRNA formyltransferase (312 aa).

Residue 113-116 coordinates (6S)-5,6,7,8-tetrahydrofolate; that stretch reads SLLP.

Belongs to the Fmt family.

The enzyme catalyses L-methionyl-tRNA(fMet) + (6R)-10-formyltetrahydrofolate = N-formyl-L-methionyl-tRNA(fMet) + (6S)-5,6,7,8-tetrahydrofolate + H(+). Functionally, attaches a formyl group to the free amino group of methionyl-tRNA(fMet). The formyl group appears to play a dual role in the initiator identity of N-formylmethionyl-tRNA by promoting its recognition by IF2 and preventing the misappropriation of this tRNA by the elongation apparatus. The chain is Methionyl-tRNA formyltransferase from Francisella philomiragia subsp. philomiragia (strain ATCC 25017 / CCUG 19701 / FSC 153 / O#319-036).